Reading from the N-terminus, the 843-residue chain is Phosphatidylinositol-glycan-specific phospholipase D (843 aa).

A signal peptide spans 1–23 (MSVGRLWSGLLLLLLFFCSRSSS). Residues Asn94, Asn271, Asn292, Asn308, and Asn322 are each glycosylated (N-linked (GlcNAc...) asparagine). FG-GAP repeat units follow at residues 368 to 429 (SPSA…GLPP), 435 to 498 (DKEA…GRLS), 500 to 560 (SPNI…RNDK), 564 to 625 (TLDE…SLGR), 635 to 695 (QREI…GATR), 707 to 773 (ALFS…TLGD), and 791 to 843 (QYVL…FSSD). 5 N-linked (GlcNAc...) asparagine glycosylation sites follow: Asn483, Asn502, Asn592, Asn605, and Asn661.

This sequence belongs to the GPLD1 family. Monomer. In terms of processing, glycosylated.

Its subcellular location is the secreted. It carries out the reaction a 6-(alpha-D-glucosaminyl)-1-(1,2-diacyl-sn-glycero-3-phospho)-1D-myo-inositol + H2O = 6-(alpha-D-glucosaminyl)-1D-myo-inositol + a 1,2-diacyl-sn-glycero-3-phosphate + H(+). Functionally, this protein hydrolyzes the inositol phosphate linkage in proteins anchored by phosphatidylinositol glycans (GPI-anchor) thus releasing these proteins from the membrane. This is Phosphatidylinositol-glycan-specific phospholipase D (Gpld1) from Rattus norvegicus (Rat).